The following is a 348-amino-acid chain: Lipopolysaccharide heptosyltransferase 2 (348 aa).

The protein belongs to the glycosyltransferase 9 family.

The catalysed reaction is an L-alpha-D-Hep-(1-&gt;5)-[alpha-Kdo-(2-&gt;4)]-alpha-Kdo-(2-&gt;6)-lipid A + ADP-L-glycero-beta-D-manno-heptose = an L-alpha-D-Hep-(1-&gt;3)-L-alpha-D-Hep-(1-&gt;5)-[alpha-Kdo-(2-&gt;4)]-alpha-Kdo-(2-&gt;6)-lipid A + ADP + H(+). It carries out the reaction L-alpha-D-Hep-(1-&gt;5)-[alpha-Kdo-(2-&gt;4)]-alpha-Kdo-(2-&gt;6)-lipid A (E. coli) + ADP-L-glycero-beta-D-manno-heptose = L-alpha-D-Hep-(1-&gt;3)-L-alpha-D-Hep-(1-&gt;5)-[alpha-Kdo-(2-&gt;4)]-alpha-Kdo-(2-&gt;6)-lipid A (E. coli) + ADP + H(+). It participates in bacterial outer membrane biogenesis; LPS core biosynthesis. Its function is as follows. Glycosyltransferase involved in the biosynthesis of the core oligosaccharide region of lipopolysaccharide (LPS). Catalyzes the addition of the second heptose unit to the heptosyl-Kdo2-lipid A module. The analog ADP-mannose can serve as an alternative donor in place of ADP-L-glycero-D-manno-heptose, but with lower efficiency. This chain is Lipopolysaccharide heptosyltransferase 2, found in Escherichia coli (strain K12).